The following is a 303-amino-acid chain: Nucleotide-binding protein SAB0719 (303 aa).

18–25 (GLSGAGKS) contacts ATP. 69–72 (DLRG) is a GTP binding site.

It belongs to the RapZ-like family.

In terms of biological role, displays ATPase and GTPase activities. This Staphylococcus aureus (strain bovine RF122 / ET3-1) protein is Nucleotide-binding protein SAB0719.